A 185-amino-acid polypeptide reads, in one-letter code: Orotate phosphoribosyltransferase (185 aa).

5-phospho-alpha-D-ribose 1-diphosphate contacts are provided by residues Arg94, Lys95, Lys98, His100, and 120–128; that span reads EDVTTTGGS. Thr124 and Arg152 together coordinate orotate.

Belongs to the purine/pyrimidine phosphoribosyltransferase family. PyrE subfamily. Homodimer. Mg(2+) is required as a cofactor.

It carries out the reaction orotidine 5'-phosphate + diphosphate = orotate + 5-phospho-alpha-D-ribose 1-diphosphate. Its pathway is pyrimidine metabolism; UMP biosynthesis via de novo pathway; UMP from orotate: step 1/2. Catalyzes the transfer of a ribosyl phosphate group from 5-phosphoribose 1-diphosphate to orotate, leading to the formation of orotidine monophosphate (OMP). The chain is Orotate phosphoribosyltransferase from Thermococcus kodakarensis (strain ATCC BAA-918 / JCM 12380 / KOD1) (Pyrococcus kodakaraensis (strain KOD1)).